The following is a 409-amino-acid chain: Peptidase T (409 aa).

Residue His78 coordinates Zn(2+). Asp80 is a catalytic residue. Residue Asp140 participates in Zn(2+) binding. The active-site Proton acceptor is the Glu174. Zn(2+) contacts are provided by Glu175, Asp197, and His379.

The protein belongs to the peptidase M20B family. Zn(2+) serves as cofactor.

It is found in the cytoplasm. It catalyses the reaction Release of the N-terminal residue from a tripeptide.. Cleaves the N-terminal amino acid of tripeptides. This chain is Peptidase T, found in Aliivibrio salmonicida (strain LFI1238) (Vibrio salmonicida (strain LFI1238)).